The sequence spans 181 residues: Ferritin BfrB (181 aa).

One can recognise a Ferritin-like diiron domain in the interval 15–150 (MQEQIHNEFT…TLVRVADRAG (136 aa)). Residues E22, E55, H58, E99, and Q132 each coordinate Fe cation.

It belongs to the ferritin family. Prokaryotic subfamily. As to quaternary structure, homooligomer of 24 subunits that are packed together to form an approximately spherical molecule with a central cavity, in which large amounts of iron can be stored.

The catalysed reaction is 4 Fe(2+) + O2 + 4 H(+) = 4 Fe(3+) + 2 H2O. Its function is as follows. Iron-storage protein that displays ferroxidase activity, catalyzing the oxidation of Fe(2+) ions into Fe(3+) ions, that can then be deposited as a ferric-oxide mineral core within the central cavity of the protein complex. The sequence is that of Ferritin BfrB (bfrB) from Mycobacterium tuberculosis (strain ATCC 35801 / TMC 107 / Erdman).